The sequence spans 360 residues: Pyrimidine monooxygenase RutA (360 aa).

FMN-binding positions include 49–50 (IK), Asn115, Glu124, 140–141 (RY), and Ser190.

The protein belongs to the NtaA/SnaA/DszA monooxygenase family. RutA subfamily.

It catalyses the reaction uracil + FMNH2 + NADH + O2 = (Z)-3-ureidoacrylate + FMN + NAD(+) + H2O + H(+). The enzyme catalyses thymine + FMNH2 + NADH + O2 = (Z)-2-methylureidoacrylate + FMN + NAD(+) + H2O + H(+). Its function is as follows. Catalyzes the pyrimidine ring opening between N-3 and C-4 by an unusual flavin hydroperoxide-catalyzed mechanism, adding oxygen atoms in the process to yield ureidoacrylate peracid, that immediately reacts with FMN forming ureidoacrylate and FMN-N(5)-oxide. The FMN-N(5)-oxide reacts spontaneously with NADH to produce FMN. Requires the flavin reductase RutF to regenerate FMN in vivo. The protein is Pyrimidine monooxygenase RutA of Pseudomonas syringae pv. syringae (strain B728a).